Here is a 112-residue protein sequence, read N- to C-terminus: Nitrogen regulatory protein P-II (112 aa).

Tyr51 carries the O-UMP-tyrosine modification.

This sequence belongs to the P(II) protein family. In terms of assembly, homotrimer.

Its function is as follows. P-II indirectly controls the transcription of the glutamine synthetase gene (glnA). P-II prevents NR-II-catalyzed conversion of NR-I to NR-I-phosphate, the transcriptional activator of glnA. When P-II is uridylylated to P-II-UMP, these events are reversed. When the ratio of Gln to 2-ketoglutarate decreases, P-II is uridylylated to P-II-UMP, which causes the deadenylation of glutamine synthetase, so activating the enzyme. In Rhodospirillum rubrum (strain ATCC 11170 / ATH 1.1.1 / DSM 467 / LMG 4362 / NCIMB 8255 / S1), this protein is Nitrogen regulatory protein P-II (glnB).